The chain runs to 377 residues: Interferon gamma receptor 1 (377 aa).

The first 23 residues, 1-23 (MRTQIYISVTVLILLLKKSDLEA), serve as a signal peptide directing secretion. Residues 24 to 235 (VRVPSPESVS…IRRYTPFTVY (212 aa)) are Extracellular-facing. A Fibronectin type-III domain is found at 26-117 (VPSPESVSVQ…DFFIFSFNEN (92 aa)). Asn78 and Asn186 each carry an N-linked (GlcNAc...) asparagine glycan. Residues 236–256 (LYPVLGVTLTLLFITGIIILL) form a helical membrane-spanning segment. Residues 257–377 (EKKCNSEMKK…TVDSYGPRLL (121 aa)) lie on the Cytoplasmic side of the membrane. The tract at residues 326-377 (VYSEDKNSYGPNDLVEDEQSDLSDFYDCPHAPKQKREMSPGDTVDSYGPRLL) is disordered.

This sequence belongs to the type II cytokine receptor family. In terms of tissue distribution, highly expressed in spleen. Also detected in brain, kidney, gill, intestine and heart. Expressed at very low levels in muscle. In immune cell populations, shows highest expression in monocytes, and slightly lower expression in peripheral blood leukocytes, splenocytes, neutrophils and mature macrophages.

It is found in the cell membrane. Receptor which shows binding specificity for the cytokine ifng1r (interferon gamma-related). In Carassius auratus (Goldfish), this protein is Interferon gamma receptor 1.